Here is a 233-residue protein sequence, read N- to C-terminus: Phosphoribosylaminoimidazole-succinocarboxamide synthase (233 aa).

It belongs to the SAICAR synthetase family.

It catalyses the reaction 5-amino-1-(5-phospho-D-ribosyl)imidazole-4-carboxylate + L-aspartate + ATP = (2S)-2-[5-amino-1-(5-phospho-beta-D-ribosyl)imidazole-4-carboxamido]succinate + ADP + phosphate + 2 H(+). Its pathway is purine metabolism; IMP biosynthesis via de novo pathway; 5-amino-1-(5-phospho-D-ribosyl)imidazole-4-carboxamide from 5-amino-1-(5-phospho-D-ribosyl)imidazole-4-carboxylate: step 1/2. The chain is Phosphoribosylaminoimidazole-succinocarboxamide synthase from Staphylococcus saprophyticus subsp. saprophyticus (strain ATCC 15305 / DSM 20229 / NCIMB 8711 / NCTC 7292 / S-41).